Reading from the N-terminus, the 180-residue chain is Inner membrane-spanning protein YciB (180 aa).

Transmembrane regions (helical) follow at residues 25-45 (QNATLYMLITAIICVTICYFV), 54-74 (IISVSVLLVSGIITLISGNSI), 76-96 (IKIKPTILYVIFGIIFLMSGI), 118-138 (ITLSYRAAAFFFFMAVVNEIV), and 150-170 (FKVFGVIPITFIFILLQLPLL).

Belongs to the YciB family.

Its subcellular location is the cell inner membrane. Plays a role in cell envelope biogenesis, maintenance of cell envelope integrity and membrane homeostasis. The sequence is that of Inner membrane-spanning protein YciB from Rickettsia canadensis (strain McKiel).